Here is a 411-residue protein sequence, read N- to C-terminus: Peptidase T (411 aa).

Histidine 78 is a Zn(2+) binding site. Aspartate 80 is a catalytic residue. Aspartate 140 is a binding site for Zn(2+). Glutamate 173 acts as the Proton acceptor in catalysis. Zn(2+) contacts are provided by glutamate 174, aspartate 196, and histidine 379.

Belongs to the peptidase M20B family. The cofactor is Zn(2+).

It is found in the cytoplasm. It carries out the reaction Release of the N-terminal residue from a tripeptide.. Cleaves the N-terminal amino acid of tripeptides. The polypeptide is Peptidase T (Yersinia pseudotuberculosis serotype O:1b (strain IP 31758)).